Consider the following 1005-residue polypeptide: MEAQQALVASKDGDMATLERLFEAGALRPDITDDLGAGLVHHATRAGHLDCVKFLVQRAKLPGNQQAHNGATPVHDAAATGNLAELCWLVRDAGCGLQDQDASGVSPLHLAARFGHPALVEWLLREGHAATLETLEGALPLHHAAVSGDLTCLKLLTAAHSSGVNQRTCSGASPLYLACQEGHLHLAQFLVKDCGADVRLRALDGMSSLHAAAAHGHYSLVVWLVTFTDIGLTARDNEGATALHFAARGGHTPILDRLLLMGAPIMRDSWGGTPLHDAAENGHMECCQTLLSHHVDPFLRDEDGYTAIDLAEYHGHQDCAQFLREMSRPVRVLMTPPPPPFPPPPLLAAKLSLEEERRGDSGLKSPSSATLSPVWPAQPVPREPMACTAPLRVTTPDALQGPEVEARDSRAGLATLQLDGLPAGDLDMLVPTQDERGRPIPEWKRQVMVRKLQARLGADHPPEDQDQSQRQDSGPTAAEQATWRYSQTHQAILGPFGELLTEDDLVYLEKQINDLQLRRRCQEYESELGRLAAQLQALLPEPLVSITVNSHFLPRAPGLEDEEAPVLATELEASEEPGKAEPRGQPLPFWCSHIGRLVRSMSLLLKGMNGLAQGEEKPPSPVPQDLGKETIAGPSRSEAQREIQECGVSVRTLRGNFEFAPDLPCALNSGPCELGVRPGQCLRGCWSAPPQPRGDAMGGEPGPGDTEEASDSGISCEEAPSEAGAGPGLDLASLRKERIVMLFLGHWKKSAYTPALRTAACRTLEAQRARSRGPEAAGSPRPSSPQPSDGPRLGHLWQQRGIITHLLGTWKAIMAHVPARQLRRLSRRERGPLSPEQFLPHVDGAPVPYNSLSLDLFMLGYFQLLECDLPAEERKMRHLLCFEVFEHLGAHGWEAVRAFHKAVTDEVAAGRRAWTDGFEDIKARFFGSSQGPPWDVEPGRKLGLTPLGSLPHASLPGSGPEPAVPPRLGSDSQGSSFNSGDICGYIDRSFAFWKEKEAEMFNFGE.

ANK repeat units follow at residues 1–31 (MEAQQALVASKDGDMATLERLFEAGALRPDI), 35–64 (LGAGLVHHATRAGHLDCVKFLVQRAKLPGN), 69–99 (NGATPVHDAAATGNLAELCWLVRDAGCGLQD), 103–132 (SGVSPLHLAARFGHPALVEWLLREGHAATL), 136–166 (EGALPLHHAAVSGDLTCLKLLTAAHSSGVNQ), 170–200 (SGASPLYLACQEGHLHLAQFLVKDCGADVRL), 204–234 (DGMSSLHAAAAHGHYSLVVWLVTFTDIGLTA), 238–267 (EGATALHFAARGGHTPILDRLLLMGAPIMR), 270–299 (WGGTPLHDAAENGHMECCQTLLSHHVDPFL), and 303–332 (DGYTAIDLAEYHGHQDCAQFLREMSRPVRV). Disordered stretches follow at residues 355-383 (EERRGDSGLKSPSSATLSPVWPAQPVPRE) and 458-480 (ADHPPEDQDQSQRQDSGPTAAEQ). The span at 458–469 (ADHPPEDQDQSQ) shows a compositional bias: basic and acidic residues. Positions 502–539 (EDDLVYLEKQINDLQLRRRCQEYESELGRLAAQLQALL) form a coiled coil. Disordered regions lie at residues 611 to 643 (LAQGEEKPPSPVPQDLGKETIAGPSRSEAQREI), 692 to 729 (PRGDAMGGEPGPGDTEEASDSGISCEEAPSEAGAGPGL), 764 to 794 (LEAQRARSRGPEAAGSPRPSSPQPSDGPRLG), and 951 to 975 (PHASLPGSGPEPAVPPRLGSDSQGS).

As to quaternary structure, interacts with MYO3A (via C-terminus). Interacts with MYO3B (via C-terminus). As to expression, expressed in inner ear hair cells. Expressed in utricle hair bundles (at protein level). Expressed in choclea (at protein level).

The protein localises to the cell projection. Its subcellular location is the stereocilium. Binds to but does not cross-link actin. Required for the formation and maintenance of inner ear hair cell stereocilia and staircase formation. Essential for normal hearing. The sequence is that of Espin-like protein (Espnl) from Mus musculus (Mouse).